A 191-amino-acid polypeptide reads, in one-letter code: Calcium and integrin-binding protein 1 (191 aa).

A lipid anchor (N-myristoyl glycine) is attached at G2. 2 EF-hand domains span residues 103-138 and 148-183; these read TPDIKSHYAFRIFDFDDDGTLDREDLSRLVNCLTGE and EMKQLIDNILEESDIDRDGTINLSEFQHVISRSPDF. D116, D118, D120, T122, D127, D161, D163, D165, T167, and E172 together coordinate Ca(2+).

In terms of assembly, monomer. Interacts with the heterodimeric integrin alpha-IIb/beta3 (ITGA2B-ITGB3). Interacts with ITGA2B (via cytoplasmic domain); the interaction is direct and calcium-dependent. Interacts with the protein kinases PLK2/SNK and PRKDC (via the region immediately upstream of the kinase domain). Interacts with PLK3; the interaction inhibits PLK3 kinase activity. Interacts with PSEN2. Interacts (via C-terminus) with F8. Interacts with NBR1 (via C-terminus). Interacts with FEZ1 (via C-terminus). Interacts with UBR5 (via C-terminus); the interaction is sensitive to DNA damage, and may target CIB1 for ubiquitin-mediated degradation. Interacts with IFI6; the interaction is direct. Interacts with BCL2. Interacts with ITPR3; the interaction occurs in a calcium dependent manner. Interacts with PTK2/FAK1. Interacts with MAP3K5; the interaction inhibits MAP3K5 activation by phosphorylation, and its subsequent interaction with TRAF2. Interacts (via C-terminal region) with STMN2 (via the N-terminal region); the interaction is direct, occurs in a calcium-dependent manner and attenuates the STMN2-induced neurite outgrowth inhibition. Interacts with SPHK1, the interaction occurs in a calcium-dependent manner. Interacts with ITGA2B (via C-terminal cytoplasmic tail); the interaction occurs upon platelet aggregation and is stabilized/increased in a calcium and magnesium-dependent manner. Interacts with PAK1 (via N-terminal region); the interaction is direct and occurs in a calcium-dependent manner. Interacts with RAC3 (via C-terminal region); the interaction induces their association with the cytoskeleton upon alpha-IIb/beta3 integrin-mediated adhesion. Interacts with ITGA5 and ITGAV. Interacts with MYO1C. Interacts with ITGA2B (via C-terminal cytoplasmic tail region). Interacts (via C-terminal region) with PPP3R1; the interaction increases upon cardiomyocytes hypertrophy. Interacts with CACNA1C; the interaction increases upon cardiomyocytes hypertrophy. Interacts with TAS1R2 (via C-terminus); this interaction is independent of the myristoylation state of CIB1. Interacts and forms a complex with TMC6 and TMC8; the interaction stabilizes each component of the complex. In terms of tissue distribution, expressed in cardiomyocytes and neurons (at protein level). Expressed during early neural development.

Its subcellular location is the membrane. It is found in the cell membrane. The protein localises to the sarcolemma. The protein resides in the apical cell membrane. It localises to the cell projection. Its subcellular location is the ruffle membrane. It is found in the filopodium tip. The protein localises to the growth cone. The protein resides in the lamellipodium. It localises to the cytoplasm. Its subcellular location is the cytoskeleton. It is found in the microtubule organizing center. The protein localises to the centrosome. The protein resides in the perinuclear region. It localises to the nucleus. Its subcellular location is the neuron projection. It is found in the perikaryon. Functionally, calcium-binding protein that plays a role in the regulation of numerous cellular processes, such as cell differentiation, cell division, cell proliferation, cell migration, thrombosis, angiogenesis, cardiac hypertrophy and apoptosis. Involved in bone marrow megakaryocyte differentiation by negatively regulating thrombopoietin-mediated signaling pathway. Participates in the endomitotic cell cycle of megakaryocyte, a form of mitosis in which both karyokinesis and cytokinesis are interrupted. Plays a role in integrin signaling by negatively regulating alpha-IIb/beta3 activation in thrombin-stimulated megakaryocytes preventing platelet aggregation. Up-regulates PTK2/FAK1 activity, and is also needed for the recruitment of PTK2/FAK1 to focal adhesions; it thus appears to play an important role in focal adhesion formation. Positively regulates cell migration on fibronectin in a CDC42-dependent manner, the effect being negatively regulated by PAK1. Functions as a negative regulator of stress activated MAP kinase (MAPK) signaling pathways. Down-regulates inositol 1,4,5-trisphosphate receptor-dependent calcium signaling. Involved in sphingosine kinase SPHK1 translocation to the plasma membrane in a N-myristoylation-dependent manner preventing TNF-alpha-induced apoptosis. Regulates serine/threonine-protein kinase PLK3 activity for proper completion of cell division progression. Plays a role in microtubule (MT) dynamics during neuronal development; disrupts the MT depolymerization activity of STMN2 attenuating NGF-induced neurite outgrowth and the MT reorganization at the edge of lamellipodia. Promotes cardiomyocyte hypertrophy via activation of the calcineurin/NFAT signaling pathway. Stimulates calcineurin PPP3R1 activity by mediating its anchoring to the sarcolemma. In ischemia-induced (pathological or adaptive) angiogenesis, stimulates endothelial cell proliferation, migration and microvessel formation by activating the PAK1 and ERK1/ERK2 signaling pathway. Also promotes cancer cell survival and proliferation. May regulate cell cycle and differentiation of spermatogenic germ cells, and/or differentiation of supporting Sertoli cells. Forms a complex with TMC6/EVER1 and TMC8/EVER2 in lymphocytes and keratynocytes where CIB1 stabilizes TMC6 and TMC8 levels and reciprocally. The chain is Calcium and integrin-binding protein 1 (Cib1) from Rattus norvegicus (Rat).